The sequence spans 1253 residues: MAAQVTLEDALSNVDLLEELPLPDQQPCIEPPPSSLLYQPNFNTNFEDRNAFVTGIARYIEQATVHSSMNEMLEEGQEYAVMLYTWRSCSRAIPQVKCNEQPNRVEIYEKTVEVLEPEVTKLMNFMYFQRNAIERFCGEVRRLCHAERRKDFVSEAYLITLGKFINMFAVLDELKNMKCSVKNDHSAYKRAAQFLRKMADPQSIQESQNLSMFLANHNKITQSLQQQLEVISGYEELLADIVNLCVDYYENRMYLTPSEKHMLLKVMGFGLYLMDGSVSNIYKLDAKKRINLSKIDKYFKQLQVVPLFGDMQIELARYIKTSAHYEENKSRWTCASSSSSPQYNICEQMIQIREDHMRFISELARYSNSEVVTGSGRQEAQKTDAEYRKLFDLALQGLQLLSQWSAHVMEVYSWKLVHPTDKYSNKDCPDNAEEYERATRYNYTTEEKFALVEVIAMIKGLQVLMGRMESVFNHAIRHTVYAALQDFSQVTLREPLRQAIKKKKNVIQSVLQAIRKTVCDWETGHEPFNDPALRGEKDPKSGFDIKVPRRAVGPSSTQLYMVRTMLESLIADKSGSKKTLRSSLEGPTILDIEKFHRESFFYTHLINFSETLQQCCDLSQLWFREFFLELTMGRRIQFPIEMSMPWILTDHILETKEASMMEYVLYSLDLYNDSAHYALTKFNKQFLYDEIEAEVNLCFDQFVYKLADQIFAYYKVMAGSLLLDKRLRSECKNQGATIHLPPSNRYETLLKQRHVQLLGRSIDLNRLITQRVSAAMYKSLELAIGRFESEDLTSVVELDGLLEINRMTHKLLSRYLTLDSFDAMFREANHNVSAPYGRITLHVFWELNYDFLPNYCYNGSTNRFVRTVLPFSQEFQRDKQPNAQPQYLHGSKALNLAYSSIYGSYRNFVGPPHFQVICRLLGYQGIAVVMEELLKVVKSLLQGTILQYVKTLMEVMPKICRLPRHEYGSPGILEFFHHQLKDIVEYAELKTVCFQNLREVGNAVLFCLLIEQSLSLEEVCDLLHAAPFQNILPRIHVKEGERVDAKMKRLESKYAPLHLVPLIERLGTPQQIAIAREGDLLTKERLCCGLSMFEVILTRIRTFLDDPIWRGPLPSNGVMHVDECVEFHRLWSAMQFVYCIPVGTHEFTVEQCFGDGLHWAGCMIIVLLGQQRRFAVLDFCYHLLKVQKHDGKDEIIKNVPLKKMVERIRKFQILNDEIITILDKYLKSGDGESTPVEHVRCFQPPIHQSLASS.

Ser583 carries the phosphoserine modification. Residues 724–732 (DKRLRSECK) are EIF4E-binding. Thr1234 carries the phosphothreonine modification.

It belongs to the CYFIP family. In terms of assembly, component of the WAVE1 complex composed of ABI2, CYFIP1 or CYFIP2, BRK1, NCKAP1 and WASF1/WAVE1. Within the complex, a heterodimer containing NCKAP1 and CYFIP1 interacts with a heterotrimer formed by WAVE1, ABI2 and BRK1. Component of the CYFIP1-EIF4E-FMR1 complex which is composed of CYFIP, EIF4E and FMR1. Interacts with FMR1 but does not bind to related proteins FXR1 or FXR2. Interaction with EIF4E stimulates FMR1 binding. Component of the WAVE2 complex composed of ABI1, CYFIP1/SRA1, NCKAP1/NAP1 (NCKAP1L/HEM1 in hematopoietic cells) and WASF2/WAVE2. Interacts with the active GTP-bound form of RAC1. Interacts through its C-terminus with the C-terminus of DPYSL2/CRMP2 which is necessary for DPYSL2-induced axon outgrowth. Interacts with NYAP1, NYAP2 and MYO16. Interacts with TMEM108 (via N-terminus); the interaction associates TMEM108 with the WAVE1 complex. Highly expressed in embryonic and adult developing nervous system.

It is found in the cytoplasm. The protein resides in the perinuclear region. It localises to the cell projection. The protein localises to the lamellipodium. Its subcellular location is the ruffle. It is found in the synapse. The protein resides in the synaptosome. Functionally, component of the CYFIP1-EIF4E-FMR1 complex which binds to the mRNA cap and mediates translational repression. In the CYFIP1-EIF4E-FMR1 complex this subunit is an adapter between EIF4E and FMR1. Promotes the translation repression activity of FMR1 in brain probably by mediating its association with EIF4E and mRNA. Regulates formation of membrane ruffles and lamellipodia. Plays a role in axon outgrowth. Binds to F-actin but not to RNA. Part of the WAVE complex that regulates actin filament reorganization via its interaction with the Arp2/3 complex. Actin remodeling activity is regulated by RAC1. Regulator of epithelial morphogenesis. May act as an invasion suppressor in cancers. As component of the WAVE1 complex, required for BDNF-NTRK2 endocytic trafficking and signaling from early endosomes. The chain is Cytoplasmic FMR1-interacting protein 1 from Mus musculus (Mouse).